Reading from the N-terminus, the 344-residue chain is G-protein coupled receptor str-217 (344 aa).

Over 1-10 (MLLFQKTLSR) the chain is Extracellular. Residues 11 to 31 (VAAPISVAANLILILLIIFKS) traverse the membrane as a helical segment. Residues 32-39 (PAQMGNYK) lie on the Cytoplasmic side of the membrane. Residues 40–60 (YLLIGLSIFEMSYAVLDVVSE) traverse the membrane as a helical segment. Topologically, residues 61-88 (TTVLSIKKSFVVVVPYKDRSFGQETAMD) are extracellular. Residues 89 to 109 (INLIYCGFFGFSMGMFVVIFA) traverse the membrane as a helical segment. Over 110–128 (YRSFLTTGNTILRKFEGFK) the chain is Cytoplasmic. A helical transmembrane segment spans residues 129–149 (IISWFAYPLFYAIVWILVAWG). At 150 to 195 (PLASFPEMDIVVRPFLLDELNMTVDEVAYTGRLFYSTIDNSLRYSA) the chain is on the extracellular side. Asn-170 carries an N-linked (GlcNAc...) asparagine glycan. A helical membrane pass occupies residues 196–216 (ILTGVLQWVLTASSLFLVIFF). Residues 217-256 (GLRCYFHYGKLVQLTDVQSIRLRQLQNQLFLALVCQATVP) lie on the Cytoplasmic side of the membrane. A helical transmembrane segment spans residues 257-277 (LILMHIPVTILYTCCVLNIVF). Residues 278-279 (NP) lie on the Extracellular side of the membrane. A helical membrane pass occupies residues 280 to 300 (FSVATTIALFPAIDPLPTIFI). Over 301 to 344 (VKNYRVALFEFVCPSCLCWSETLKHMGSNRITSYRSNTVNALSM) the chain is Cytoplasmic.

Belongs to the nematode receptor-like protein str family. In terms of tissue distribution, expressed in the ADL chemosensory neurons.

It localises to the cell membrane. Probable G-protein coupled receptor. In Caenorhabditis elegans, this protein is G-protein coupled receptor str-217.